The following is a 420-amino-acid chain: Gamma-glutamyl phosphate reductase (420 aa).

Belongs to the gamma-glutamyl phosphate reductase family.

It is found in the cytoplasm. It carries out the reaction L-glutamate 5-semialdehyde + phosphate + NADP(+) = L-glutamyl 5-phosphate + NADPH + H(+). The protein operates within amino-acid biosynthesis; L-proline biosynthesis; L-glutamate 5-semialdehyde from L-glutamate: step 2/2. In terms of biological role, catalyzes the NADPH-dependent reduction of L-glutamate 5-phosphate into L-glutamate 5-semialdehyde and phosphate. The product spontaneously undergoes cyclization to form 1-pyrroline-5-carboxylate. This is Gamma-glutamyl phosphate reductase from Streptococcus pneumoniae (strain Hungary19A-6).